We begin with the raw amino-acid sequence, 345 residues long: UPF0284 protein STK_21430 (345 aa).

Belongs to the UPF0284 family.

In Sulfurisphaera tokodaii (strain DSM 16993 / JCM 10545 / NBRC 100140 / 7) (Sulfolobus tokodaii), this protein is UPF0284 protein STK_21430.